Consider the following 341-residue polypeptide: MLDERAKMLLKTLVERYIADGQPVGSRTLSKTSGLELSPATIRNVMSDLEELGLIASPHTSAGRIPTARGYRLFVDSMLTSRAFAREVADTGSAPLLQPDQPKRVIANAAQLLSSLSQFVGVVTVPKKPSVFRHMEFLRLGERRVLLILVSPDGDVQNRVLFTAHDYTQSQLVEATNYLNAHYAGLSIEGVRERLKLEVDALRGEIGTLMQAAVQAGTEAVNEDTEQLIVSGERNLLGVQDFGSDMGSIRKMFDLFEQKTQLLRLLDGSSRADGVRIYIGGESGVVPIEELSVVSAPYEVDGQVVGTLGVIGPTRMAYERMIQIVDITSRLVGNALSQKQG.

This sequence belongs to the HrcA family.

In terms of biological role, negative regulator of class I heat shock genes (grpE-dnaK-dnaJ and groELS operons). Prevents heat-shock induction of these operons. The chain is Heat-inducible transcription repressor HrcA from Leptothrix cholodnii (strain ATCC 51168 / LMG 8142 / SP-6) (Leptothrix discophora (strain SP-6)).